The following is a 320-amino-acid chain: MNLPVQTDERQPEQHNQVPDEWFVLNQEKNREADSVKRPSLSYTQDAWRRLKKNKLAMAGLFILLFLFVMAVIGPFLSPHSVVRQSLTEQNLPPSADHWFGTDELGRDVFTRTWYGARISLFVGVMAALIDFLIGVIYGGVAGYKGGRIDSIMMRIIEVLYGLPYLLVVILLMVLMGPGLGTIIVALTVTGWVGMARIVRGQVLQIKNYEYVLASKTFGAKTFRIIRKNLLPNTMGAIIVQMTLTVPAAIFAESFLSFLGLGIQAPFASWGVMANDGLPTILSGHWWRLFFPAFFISLTMYAFNVLGDGLQDALDPKLRR.

Helical transmembrane passes span 56 to 76 (LAMAGLFILLFLFVMAVIGPF), 121 to 141 (LFVGVMAALIDFLIGVIYGGV), 154 to 176 (MRIIEVLYGLPYLLVVILLMVLM), 230 to 252 (LLPNTMGAIIVQMTLTVPAAIFA), 267 to 287 (FASWGVMANDGLPTILSGHWW), and 289 to 309 (LFFPAFFISLTMYAFNVLGDG). Residues 117–307 (ARISLFVGVM…LTMYAFNVLG (191 aa)) form the ABC transmembrane type-1 domain.

The protein belongs to the binding-protein-dependent transport system permease family. OppBC subfamily.

It is found in the cell membrane. Probably part of the ABC transporter DppBCDE involved in dipeptide transport. Responsible for the translocation of the substrate across the membrane. This is Dipeptide transport system permease protein DppC (dppC) from Bacillus subtilis (strain 168).